Reading from the N-terminus, the 296-residue chain is MKDFEFFAPKTLEEAKGLLHQYKDVPPAIIAGGTDLVIEINDRWEKPDVVIDIKKLKELEYIRVEENTIHIGALSTFTQIENHPFIRSHVRALYKAASQVGSPQIRNLGTIGGNLSTSSVAGDGVSAMTTLDATVVLESVRGTRQMKLTDFFDGEGFKRRNALEADEIMTEVIIDRPDAHSASAFYKLAKRKSLAISVIGGGMAVKVDDAGVCTWASMRGGCIGRYPLHFKQAEEMLVGAPLTMETMEATLPILHDTVYDMARARPSVLYKKESVQGVFKKLFVDILDQLEGGCNE.

The 179-residue stretch at 1 to 179 folds into the FAD-binding PCMH-type domain; that stretch reads MKDFEFFAPK…TEVIIDRPDA (179 aa). FAD contacts are provided by residues 29 to 36, Gly-101, 110 to 114, Asp-123, Arg-160, Met-169, and Lys-187; these read IIAGGTDL and TIGGN.

In terms of assembly, heterooctamer of NDHM, NDHL, NDHS and NDHF. Dimer of heterotetramers. FAD is required as a cofactor.

It carries out the reaction nicotinate + NADP(+) + H2O = 6-hydroxynicotinate + NADPH + H(+). Its pathway is cofactor degradation; nicotinate degradation; 6-hydroxynicotinate from nicotinate: step 1/1. With respect to regulation, reversibly inactivated by selenide and sulfide. Not inhibited by cyanide. In terms of biological role, catalyzes the hydroxylation of nicotinate to 6-hydroxynicotinate. Also active against 2-pyrazinecarboxylic acid, but inactive against other nicotinate analogs. The polypeptide is Nicotinate dehydrogenase FAD-subunit (ndhF) (Eubacterium barkeri (Clostridium barkeri)).